The following is a 340-amino-acid chain: HPr kinase/phosphorylase (340 aa).

Residues H153 and K174 contribute to the active site. 168–175 (GRSGIGKS) contributes to the ATP binding site. S175 serves as a coordination point for Mg(2+). Catalysis depends on D192, which acts as the Proton acceptor; for phosphorylation activity. Proton donor; for dephosphorylation activity. Residues 216–225 (MEIRGLGIID) are important for the catalytic mechanism of both phosphorylation and dephosphorylation. E217 is a binding site for Mg(2+). R258 is an active-site residue. Residues 279-284 (PIYPGK) form an important for the catalytic mechanism of dephosphorylation region.

Belongs to the HPrK/P family. Homohexamer. Requires Mg(2+) as cofactor.

It catalyses the reaction [HPr protein]-L-serine + ATP = [HPr protein]-O-phospho-L-serine + ADP + H(+). The enzyme catalyses [HPr protein]-O-phospho-L-serine + phosphate + H(+) = [HPr protein]-L-serine + diphosphate. Its function is as follows. Catalyzes the ATP- as well as the pyrophosphate-dependent phosphorylation of a specific serine residue in HPr, a phosphocarrier protein of the phosphoenolpyruvate-dependent sugar phosphotransferase system (PTS). HprK/P also catalyzes the pyrophosphate-producing, inorganic phosphate-dependent dephosphorylation (phosphorolysis) of seryl-phosphorylated HPr (P-Ser-HPr). The sequence is that of HPr kinase/phosphorylase from Chloroherpeton thalassium (strain ATCC 35110 / GB-78).